The following is a 146-amino-acid chain: Large ribosomal subunit protein uL23m (146 aa).

The segment at 108–138 (PDLFPEKDPRSPEPLEEELPQQRQSSDLRCP) is disordered. Residues 111-120 (FPEKDPRSPE) are compositionally biased toward basic and acidic residues.

The protein belongs to the universal ribosomal protein uL23 family. In terms of assembly, component of the mitochondrial ribosome large subunit (39S) which comprises a 16S rRNA and about 50 distinct proteins.

Its subcellular location is the mitochondrion. The protein is Large ribosomal subunit protein uL23m (Mrpl23) of Mus musculus (Mouse).